The primary structure comprises 270 residues: Protein tonB2 (270 aa).

The Cytoplasmic portion of the chain corresponds to 1 to 51; sequence MATPQPVDARTQPWRETPGGDLVALGRPVRQALHLVRHNPAQGRVLSRRET. A helical membrane pass occupies residues 52–69; the sequence is ILLVLFALTLHGAVIHWL. The Periplasmic segment spans residues 70–270; it reads SQQRTPALPE…VSVPIDFKLN (201 aa). The tract at residues 80-187 is disordered; that stretch reads VPPQVPPMTI…LTPPSANAGY (108 aa). The span at 94-118 shows a compositional bias: pro residues; that stretch reads PAPPVVEPPPPEPLPPVVEEPPPPV. The segment covering 133–143 has biased composition (basic residues); it reads PKPKPKPKPQP. A compositionally biased stretch (pro residues) spans 144–180; that stretch reads RPKPAPKAVEPAPPAPPQPAAPPAPPAPAAAPAPLTP. Residues 180-270 form the TonB C-terminal domain; sequence PPSANAGYLH…VSVPIDFKLN (91 aa).

The protein belongs to the TonB family. Homodimer. Forms a complex with the accessory proteins ExbB and ExbD.

It is found in the cell inner membrane. Functionally, interacts with outer membrane receptor proteins that carry out high-affinity binding and energy dependent uptake into the periplasmic space of specific substrates. It could act to transduce energy from the cytoplasmic membrane to specific energy-requiring processes in the outer membrane, resulting in the release into the periplasm of ligands bound by these outer membrane proteins. The polypeptide is Protein tonB2 (tonB2) (Pseudomonas aeruginosa (strain ATCC 15692 / DSM 22644 / CIP 104116 / JCM 14847 / LMG 12228 / 1C / PRS 101 / PAO1)).